Consider the following 481-residue polypeptide: Cardiolipin synthase A (481 aa).

Helical transmembrane passes span 10–30 and 40–60; these read FFGYLLGLIHLLGVVAALHAL and IAWAMPLFFIPYLTLIPYLIF. PLD phosphodiesterase domains lie at 220–247 and 394–421; these read VNFRNHRKIVVVDGLLGFIGGHNVGDEY and QPGFLHQKVVLVDDEVSAIGSANLDNRS. Residues His-225, Lys-227, Asp-232, His-399, Lys-401, and Asp-406 contribute to the active site.

The protein belongs to the phospholipase D family. Cardiolipin synthase subfamily. ClsA sub-subfamily.

The protein resides in the cell inner membrane. It catalyses the reaction 2 a 1,2-diacyl-sn-glycero-3-phospho-(1'-sn-glycerol) = a cardiolipin + glycerol. Its function is as follows. Catalyzes the reversible phosphatidyl group transfer from one phosphatidylglycerol molecule to another to form cardiolipin (CL) (diphosphatidylglycerol) and glycerol. The protein is Cardiolipin synthase A of Pseudomonas putida (Arthrobacter siderocapsulatus).